The sequence spans 405 residues: uncharacterized protein (405 aa).

Disordered regions lie at residues 1–21 (MSKKVNKNASPKNNSDSESKT), 150–179 (IKDESDSDSDDEDTKKKKKNTKNKGKQEGP), and 285–405 (DDED…KSRS). Residues 7-16 (KNASPKNNSD) show a composition bias toward polar residues. Acidic residues-rich tracts occupy residues 312-331 (SDDEDSDNEKEKEKEEDDEE) and 349-358 (DDEDDEEEGE). 2 stretches are compositionally biased toward basic residues: residues 365–374 (SSKKSSKKAS) and 390–405 (PKKKSSKAKSPSKSRS).

This is an uncharacterized protein from Acanthamoeba polyphaga (Amoeba).